Here is a 255-residue protein sequence, read N- to C-terminus: Geranylgeranylglyceryl phosphate synthase (255 aa).

Positions 34 and 64 each coordinate Mg(2+). Sn-glycerol 1-phosphate is bound by residues 182 to 188, 213 to 214, and 235 to 236; these read YLEAGSG, GG, and GN.

This sequence belongs to the GGGP/HepGP synthase family. Group II subfamily. Mg(2+) serves as cofactor.

It is found in the cytoplasm. It catalyses the reaction sn-glycerol 1-phosphate + (2E,6E,10E)-geranylgeranyl diphosphate = sn-3-O-(geranylgeranyl)glycerol 1-phosphate + diphosphate. Its pathway is membrane lipid metabolism; glycerophospholipid metabolism. Its function is as follows. Prenyltransferase that catalyzes the transfer of the geranylgeranyl moiety of geranylgeranyl diphosphate (GGPP) to the C3 hydroxyl of sn-glycerol-1-phosphate (G1P). This reaction is the first ether-bond-formation step in the biosynthesis of archaeal membrane lipids. The protein is Geranylgeranylglyceryl phosphate synthase of Saccharolobus islandicus (strain M.16.27) (Sulfolobus islandicus).